The following is a 185-amino-acid chain: Threonylcarbamoyl-AMP synthase (185 aa).

The YrdC-like domain occupies 1 to 185 (MKNFEQVLKA…AKTSQILRQG (185 aa)). Residues 163–185 (ETSGRNKPSEIRDAKTSQILRQG) are disordered. Over residues 164 to 177 (TSGRNKPSEIRDAK) the composition is skewed to basic and acidic residues.

Belongs to the SUA5 family. TsaC subfamily.

Its subcellular location is the cytoplasm. The enzyme catalyses L-threonine + hydrogencarbonate + ATP = L-threonylcarbamoyladenylate + diphosphate + H2O. In terms of biological role, required for the formation of a threonylcarbamoyl group on adenosine at position 37 (t(6)A37) in tRNAs that read codons beginning with adenine. Catalyzes the conversion of L-threonine, HCO(3)(-)/CO(2) and ATP to give threonylcarbamoyl-AMP (TC-AMP) as the acyladenylate intermediate, with the release of diphosphate. The chain is Threonylcarbamoyl-AMP synthase from Vibrio campbellii (strain ATCC BAA-1116).